Consider the following 354-residue polypeptide: Probable L-ascorbate-6-phosphate lactonase UlaG (354 aa).

The protein belongs to the UlaG family. A divalent metal cation is required as a cofactor.

It localises to the cytoplasm. The catalysed reaction is L-ascorbate 6-phosphate + H2O = 3-dehydro-L-gulonate 6-phosphate. It functions in the pathway cofactor degradation; L-ascorbate degradation; D-xylulose 5-phosphate from L-ascorbate: step 1/4. Its function is as follows. Probably catalyzes the hydrolysis of L-ascorbate-6-P into 3-keto-L-gulonate-6-P. Is essential for L-ascorbate utilization under anaerobic conditions. In Escherichia coli O127:H6 (strain E2348/69 / EPEC), this protein is Probable L-ascorbate-6-phosphate lactonase UlaG.